The chain runs to 334 residues: ADP-L-glycero-D-manno-heptose-6-epimerase (334 aa).

Residues Phe11–Ile12, Asp32–Asn33, Lys39, Lys54, Gln77–Ser81, and Asn94 each bind NADP(+). The active-site Proton acceptor is the Tyr141. An NADP(+)-binding site is contributed by Lys145. Asn171 serves as a coordination point for substrate. 2 residues coordinate NADP(+): Val172 and Lys180. Lys180 (proton acceptor) is an active-site residue. Residues Arg182, His189, Phe203–Asn206, Arg216, and Tyr295 each bind substrate.

It belongs to the NAD(P)-dependent epimerase/dehydratase family. HldD subfamily. Homopentamer. It depends on NADP(+) as a cofactor.

It carries out the reaction ADP-D-glycero-beta-D-manno-heptose = ADP-L-glycero-beta-D-manno-heptose. It functions in the pathway nucleotide-sugar biosynthesis; ADP-L-glycero-beta-D-manno-heptose biosynthesis; ADP-L-glycero-beta-D-manno-heptose from D-glycero-beta-D-manno-heptose 7-phosphate: step 4/4. Functionally, catalyzes the interconversion between ADP-D-glycero-beta-D-manno-heptose and ADP-L-glycero-beta-D-manno-heptose via an epimerization at carbon 6 of the heptose. In Neisseria meningitidis serogroup C (strain 053442), this protein is ADP-L-glycero-D-manno-heptose-6-epimerase.